The following is a 354-amino-acid chain: Rhodopsin (354 aa).

The Extracellular portion of the chain corresponds to 1 to 36; it reads MNGTEGPYFNVPMVNTTGIVRSPYEYPQYYLVSPAA. N-linked (GlcNAc...) asparagine glycans are attached at residues N2 and N15. Residues 37 to 61 traverse the membrane as a helical segment; that stretch reads YAALGAYMFFLILVGFPINFLTLYV. The Cytoplasmic portion of the chain corresponds to 62-73; sequence TLEHKKLRTPLN. The helical transmembrane segment at 74–96 threads the bilayer; the sequence is YILLNLAVADLFMVFGGFTTTMY. The Extracellular portion of the chain corresponds to 97 to 110; it reads TSMHGYFVLGRLGC. Cysteines 110 and 187 form a disulfide. The helical transmembrane segment at 111 to 133 threads the bilayer; that stretch reads NLEGFFATLGGEIGLWSLVVLAI. Residues 134–136 carry the 'Ionic lock' involved in activated form stabilization motif; sequence ERW. Residues 134-152 lie on the Cytoplasmic side of the membrane; the sequence is ERWVVVCKPISNFRFGENH. A helical transmembrane segment spans residues 153–173; that stretch reads AIMGLVFTWIMAASCAVPPLV. Residues 174 to 202 are Extracellular-facing; that stretch reads GWSRYIPEGMQCSCGVDYYTRAEGFNNES. A helical transmembrane segment spans residues 203–224; the sequence is FVVYMFVCHFLIPLIVVFFCYG. Residues 225 to 252 lie on the Cytoplasmic side of the membrane; sequence RLLCAVKEAAAAQQESETTQRAEREVTR. Residues 253-274 traverse the membrane as a helical segment; sequence MVVIMVIGFLVCWLPYASVAWY. The Extracellular portion of the chain corresponds to 275–286; the sequence is IFTNQGSEFGPL. The chain crosses the membrane as a helical span at residues 287–308; sequence FMTIPAFFAKSSSIYNPAIYIC. An N6-(retinylidene)lysine modification is found at K296. Topologically, residues 309–354 are cytoplasmic; the sequence is MNKQFRNCMITTLCCGKNPFEEEEGASTTASKTEASSVSSSSVSPA. Residues C322 and C323 are each lipidated (S-palmitoyl cysteine). Residues 332-354 are disordered; it reads EGASTTASKTEASSVSSSSVSPA. Residues 334–354 are compositionally biased toward low complexity; the sequence is ASTTASKTEASSVSSSSVSPA.

This sequence belongs to the G-protein coupled receptor 1 family. Opsin subfamily. In terms of processing, phosphorylated on some or all of the serine and threonine residues present in the C-terminal region. Contains one covalently linked retinal chromophore.

It is found in the membrane. It localises to the cell projection. Its subcellular location is the cilium. The protein resides in the photoreceptor outer segment. In terms of biological role, photoreceptor required for image-forming vision at low light intensity. While most salt water fish species use retinal as chromophore, most freshwater fish use 3-dehydroretinal, or a mixture of retinal and 3-dehydroretinal. Light-induced isomerization of 11-cis to all-trans retinal triggers a conformational change that activates signaling via G-proteins. Subsequent receptor phosphorylation mediates displacement of the bound G-protein alpha subunit by arrestin and terminates signaling. The protein is Rhodopsin (rho) of Oryzias latipes (Japanese rice fish).